A 408-amino-acid polypeptide reads, in one-letter code: Interferon-activable protein 203 (408 aa).

The region spanning 1-87 (MAEYKNIVLL…AKKLKTEKAK (87 aa)) is the Pyrin domain. Residues 84–208 (EKAKVQEKKK…EGHHQGPKQV (125 aa)) form a disordered region. Over residues 92–102 (KKGKCKTAGKK) the composition is skewed to basic residues. A compositionally biased stretch (polar residues) spans 150–159 (AQLPETSGTN). Residues 190–388 (TVPKEPSREE…SVRHSYMQVI (199 aa)) enclose the HIN-200 domain.

The protein belongs to the HIN-200 family. As to expression, constitutively expressed in the thymus, bone marrow and spleen. Isoform 1 and isoform 3 are present in liver (at protein level).

Its subcellular location is the nucleus. This chain is Interferon-activable protein 203 (Ifi203), found in Mus musculus (Mouse).